Here is a 285-residue protein sequence, read N- to C-terminus: MKFVGAHVSAAGGVDQAVIRAHELEATAFALFTKNQRQWRAAPLAEDVIEKFKLACEKYGYTSAQILPHDSYLINLGHPVTEALEKSREAFIDELVRCQQLGLSLLNFHPGSHLLQIDEDQCLARIAESINIALDATEGVTAVIENTAGQGSNLGFKFEHLAAIIERVEDKSRVGVCIDTCHAFAAGYDLRTEEDCEHTFAALGKIVGFQYLRGMHLNDAKSEFNSRVDRHHSLGEGNIGKTVFSYIMRDSRFDNIPLILETVNMDIWAEEIAWLKSQAEIEPSL.

Zn(2+) is bound by residues histidine 69, histidine 109, glutamate 145, aspartate 179, histidine 182, histidine 216, aspartate 229, histidine 231, and glutamate 261.

It belongs to the AP endonuclease 2 family. Zn(2+) serves as cofactor.

The enzyme catalyses Endonucleolytic cleavage to 5'-phosphooligonucleotide end-products.. Its function is as follows. Endonuclease IV plays a role in DNA repair. It cleaves phosphodiester bonds at apurinic or apyrimidinic (AP) sites, generating a 3'-hydroxyl group and a 5'-terminal sugar phosphate. The chain is Probable endonuclease 4 from Yersinia pestis bv. Antiqua (strain Antiqua).